We begin with the raw amino-acid sequence, 666 residues long: TATA box-binding protein-associated factor RNA polymerase I subunit B (666 aa).

The segment at 1–29 adopts an RRN7-type zinc-finger fold; the sequence is MICTECENDAFDEEDDGYYYCQRCGVQVE. Positions 3, 6, 21, and 24 each coordinate Zn(2+). The B-reader stretch occupies residues 30–64; the sequence is NLIQTGVDDGDLIGEGGGTQGALYNPKHRRTEPQP. Disordered stretches follow at residues 45 to 110 and 189 to 208; these read GGGT…VDKE and DSEH…LKRH. The segment at 65–80 is B-linker; sequence ITPSQPRFTDDTSRYS. Polar residues predominate over residues 78–89; the sequence is RYSQFKSQFESE. The interval 81–285 is N-terminal cyclin fold; that stretch reads QFKSQFESEN…REQMGERSAA (205 aa). Composition is skewed to basic and acidic residues over residues 90 to 110 and 189 to 202; these read NGNK…VDKE and DSEH…VKDA. A C-terminal cyclin fold region spans residues 286–288; the sequence is CPV. The tract at residues 515 to 548 is disordered; sequence SDGNNPCSSSSRRNESVSIGLDLSSSEHRESSSP. A compositionally biased stretch (basic and acidic residues) spans 539–548; it reads SSEHRESSSP.

Belongs to the RRN7/TAF1B family. In terms of assembly, interacts with TFIIF. Interacts with MEE14/CBP1, TBP1 and NRPB1 (via CTD). In terms of tissue distribution, expressed at high levels in seedlings, inflorescences and young siliques and at lower levels in roots. Not detected in leaves and stems. Detected in root tips and shoot apical meristems, in anthers, primarily in microspores with weaker expression in mature pollen grains and in the central cell of the mature female gametophyte. Not expressed in synergids, egg cells, antipodal cells, endosperm cells and fertilized egg cells.

It localises to the nucleus. The protein resides in the nucleolus. Component of RNA polymerase I core factor complex that acts as a GTF2B/TFIIB-like factor and plays a key role in multiple steps during transcription initiation such as pre-initiation complex (PIC) assembly and postpolymerase recruitment events in polymerase I (Pol I) transcription. Binds rDNA promoters and plays a role in Pol I recruitment. Required for the development of the one-cell zygote and endosperm in embryos. Required for micropylar pollen tube guidance, but has no effect on ovule development and gametophytic cell fate specification. May regulate the transcription of secreted cysteine-rich peptide (CRP) genes in the embryo sac. The protein is TATA box-binding protein-associated factor RNA polymerase I subunit B of Arabidopsis thaliana (Mouse-ear cress).